The following is a 1755-amino-acid chain: Transposon Ty1-DR5 Gag-Pol polyprotein (1755 aa).

3 stretches are compositionally biased toward polar residues: residues 1-10 (MESQQLSNYP), 48-60 (TKAN…TPAS), and 127-152 (QSQF…GNTF). Disordered stretches follow at residues 1–93 (MESQ…MMTQ), 126–173 (PQSQ…RPPP), and 352–421 (GSRN…SKST). The span at 153-165 (TDSSSADSDMTST) shows a compositional bias: low complexity. The segment at 299–401 (NNGIHINNKV…NSKSKTARAH (103 aa)) is RNA-binding. Over residues 402 to 418 (NVSTSNNSPSTDNDSIS) the composition is skewed to low complexity. The active-site For protease activity; shared with dimeric partner is the D461. The segment at 583 to 640 (NVHTSESTRKYPYPFIHRMLAHANAQTIRYSLKNNTITYFNESDVDWSSAIDYQCPDC) is integrase-type zinc finger-like. The 176-residue stretch at 660 to 835 (NSYEPFQYLH…AGLDISTLLP (176 aa)) folds into the Integrase catalytic domain. Mg(2+) contacts are provided by D671 and D736. 3 disordered regions span residues 956–1087 (SKAV…ETEK), 1092–1111 (RSPS…NIVP), and 1130–1187 (DLPL…DNET). The segment covering 960-969 (SPTDSTPPST) has biased composition (low complexity). A compositionally biased stretch (polar residues) spans 1005 to 1015 (STPQISNIEST). Basic and acidic residues predominate over residues 1038–1053 (ESSHASKSKDFRHSDS). Composition is skewed to polar residues over residues 1054 to 1082 (YSEN…QISD) and 1101 to 1111 (PENNSSHNIVP). The Bipartite nuclear localization signal motif lies at 1178-1212 (KKRSLEDNETEIKVSRDTWNTKNMRSLEPPRSKKR). One can recognise a Reverse transcriptase Ty1/copia-type domain in the interval 1338–1476 (NNYYITQLDI…DILGLEIKYQ (139 aa)). Mg(2+)-binding residues include D1346, D1427, D1428, D1610, E1652, and D1685. The region spanning 1610–1752 (DASYGNQPYY…IKTFKLLTNK (143 aa)) is the RNase H Ty1/copia-type domain.

In terms of assembly, the capsid protein forms a homotrimer, from which the VLPs are assembled. The protease is a homodimer, whose active site consists of two apposed aspartic acid residues. Initially, virus-like particles (VLPs) are composed of the structural unprocessed proteins Gag and Gag-Pol, and also contain the host initiator methionine tRNA (tRNA(i)-Met) which serves as a primer for minus-strand DNA synthesis, and a dimer of genomic Ty RNA. Processing of the polyproteins occurs within the particle and proceeds by an ordered pathway, called maturation. First, the protease (PR) is released by autocatalytic cleavage of the Gag-Pol polyprotein yielding capsid protein p45 and a Pol-p154 precursor protein. This cleavage is a prerequisite for subsequent processing of Pol-p154 at the remaining sites to release the mature structural and catalytic proteins. Maturation takes place prior to the RT reaction and is required to produce transposition-competent VLPs.

It is found in the cytoplasm. The protein resides in the nucleus. The catalysed reaction is DNA(n) + a 2'-deoxyribonucleoside 5'-triphosphate = DNA(n+1) + diphosphate. It carries out the reaction Endonucleolytic cleavage to 5'-phosphomonoester.. Capsid protein (CA) is the structural component of the virus-like particle (VLP), forming the shell that encapsulates the retrotransposons dimeric RNA genome. The particles are assembled from trimer-clustered units and there are holes in the capsid shells that allow for the diffusion of macromolecules. CA also has nucleocapsid-like chaperone activity, promoting primer tRNA(i)-Met annealing to the multipartite primer-binding site (PBS), dimerization of Ty1 RNA and initiation of reverse transcription. In terms of biological role, the aspartyl protease (PR) mediates the proteolytic cleavages of the Gag and Gag-Pol polyproteins after assembly of the VLP. Functionally, reverse transcriptase/ribonuclease H (RT) is a multifunctional enzyme that catalyzes the conversion of the retro-elements RNA genome into dsDNA within the VLP. The enzyme displays a DNA polymerase activity that can copy either DNA or RNA templates, and a ribonuclease H (RNase H) activity that cleaves the RNA strand of RNA-DNA heteroduplexes during plus-strand synthesis and hydrolyzes RNA primers. The conversion leads to a linear dsDNA copy of the retrotransposon that includes long terminal repeats (LTRs) at both ends. Its function is as follows. Integrase (IN) targets the VLP to the nucleus, where a subparticle preintegration complex (PIC) containing at least integrase and the newly synthesized dsDNA copy of the retrotransposon must transit the nuclear membrane. Once in the nucleus, integrase performs the integration of the dsDNA into the host genome. The sequence is that of Transposon Ty1-DR5 Gag-Pol polyprotein (TY1B-DR5) from Saccharomyces cerevisiae (strain ATCC 204508 / S288c) (Baker's yeast).